A 586-amino-acid polypeptide reads, in one-letter code: Arginine--tRNA ligase (586 aa).

A 'HIGH' region motif is present at residues 131–141 (ANPTGPLHVGH).

The protein belongs to the class-I aminoacyl-tRNA synthetase family. Monomer.

Its subcellular location is the cytoplasm. It carries out the reaction tRNA(Arg) + L-arginine + ATP = L-arginyl-tRNA(Arg) + AMP + diphosphate. This Nitrosomonas eutropha (strain DSM 101675 / C91 / Nm57) protein is Arginine--tRNA ligase.